The primary structure comprises 205 residues: Nascent polypeptide-associated complex subunit alpha-like protein (205 aa).

Disordered regions lie at residues 1 to 73 (MPSV…RKAM) and 137 to 166 (KAPN…DTGV). Basic and acidic residues predominate over residues 20 to 29 (EQQELEHSDE). Residues 30-51 (PILEDDEDDDDEEDDNDEDDAQ) are compositionally biased toward acidic residues. The span at 56–66 (GEGKSKQSRSE) shows a compositional bias: basic and acidic residues. The NAC-A/B domain maps to 63–128 (SRSEKKCRKA…AKIEDLSSQL (66 aa)). Over residues 155–165 (QEDEDEVDDTG) the composition is skewed to acidic residues. Residues 166–203 (VEPKDIELVMTQAGVSRTKAVKALKAADGDIVSAIMDL) form the UBA domain.

Belongs to the NAC-alpha family.

Its function is as follows. May promote appropriate targeting of ribosome-nascent polypeptide complexes. This Pinus taeda (Loblolly pine) protein is Nascent polypeptide-associated complex subunit alpha-like protein.